We begin with the raw amino-acid sequence, 293 residues long: ELMO domain-containing protein 2 (293 aa).

The ELMO domain occupies 126-282 (QHEKLLIKLW…KFHEKIKGLL (157 aa)).

In terms of biological role, acts as a GTPase-activating protein (GAP) toward guanine nucleotide exchange factors like ARL2, ARL3, ARF1 and ARF6, but not for GTPases outside the Arf family. This chain is ELMO domain-containing protein 2 (ELMOD2), found in Bos taurus (Bovine).